The primary structure comprises 398 residues: Phosphoglycerate kinase (398 aa).

Residues 21–23 (DFN), Arg36, 59–62 (HLGR), Arg119, and Arg157 contribute to the substrate site. Residues Lys208, Gly296, Glu327, and 354–357 (GGDS) contribute to the ATP site.

It belongs to the phosphoglycerate kinase family. Monomer.

It is found in the cytoplasm. The catalysed reaction is (2R)-3-phosphoglycerate + ATP = (2R)-3-phospho-glyceroyl phosphate + ADP. It participates in carbohydrate degradation; glycolysis; pyruvate from D-glyceraldehyde 3-phosphate: step 2/5. This is Phosphoglycerate kinase from Streptococcus pneumoniae serotype 19F (strain G54).